The following is a 152-amino-acid chain: SKP1-like protein 11 (152 aa).

An interaction with the F-box domain of F-box proteins region spans residues 94-152 (ILAANYLNIKSLLDLTCQTVADMIKGKTPEEIRSTFNIENDFTPEEEEAVRKENQWAFE).

This sequence belongs to the SKP1 family. Part of a SCF (SKP1-cullin-F-box) protein ligase complex. Interacts with ADO3/FKF1, COI1/FBL2, EBF1/FBL6, PP2A13, PP2B10, UFO, SKIP2, SKIP15, SKIP16, SKIP32, CPR1/CPR30, At1g55000, At1g67340, At1g78100, At3g04660, At3g16740, At3g61590, At4g38940 and At5g49610. As to expression, expressed in young seedlings, cotyledons, roots, leaves, floral stems, inflorescences, pollen, and siliques, with a slightly higher level in inflorescence than in other tissues.

The protein resides in the nucleus. It participates in protein modification; protein ubiquitination. Functionally, involved in ubiquitination and subsequent proteasomal degradation of target proteins. Together with CUL1, RBX1 and a F-box protein, it forms a SCF E3 ubiquitin ligase complex. The functional specificity of this complex depends on the type of F-box protein. In the SCF complex, it serves as an adapter that links the F-box protein to CUL1. Plays a role during early flowers reproductive development. The chain is SKP1-like protein 11 (ASK11) from Arabidopsis thaliana (Mouse-ear cress).